We begin with the raw amino-acid sequence, 441 residues long: Membrane-bound protease PH1510 (441 aa).

Residues 1-20 form the signal peptide; sequence MRRILLSMIVLIFLASPILA. 64–67 is a binding site for substrate; the sequence is GGRA. The Nucleophile role is filled by Ser97. Position 119-124 (119-124) interacts with substrate; that stretch reads ACRPIL. The active-site Proton donor/acceptor is the Lys138. Helical transmembrane passes span 239 to 259, 271 to 291, 307 to 327, and 344 to 364; these read VAYL…LTPG, IILA…ILLI, FGLF…LLFG, and ILII…MAAV.

Belongs to the peptidase S14 family. In terms of assembly, homodimer.

It is found in the membrane. Its activity is regulated as follows. Inhibited by divalent metal cations, including Mg(2+), Mn(2+), Ca(2+) and Zn(2+). Mildly inhibited by 0.01 % SDS and 0.1% dodecyl-beta-D-maltoside. Activity is nearly abolished by 1 % SDS. Functionally, protease that cleaves its substrates preferentially near hydrophobic or aromatic amino acid residues. Can degrade casein and the stomatin homolog PH1511 (in vitro). The polypeptide is Membrane-bound protease PH1510 (Pyrococcus horikoshii (strain ATCC 700860 / DSM 12428 / JCM 9974 / NBRC 100139 / OT-3)).